Consider the following 73-residue polypeptide: UPF0435 protein Lm4b_01721 (73 aa).

Belongs to the UPF0435 family.

This Listeria monocytogenes serotype 4b (strain CLIP80459) protein is UPF0435 protein Lm4b_01721.